The chain runs to 470 residues: Uronate isomerase (470 aa).

It belongs to the metallo-dependent hydrolases superfamily. Uronate isomerase family.

It catalyses the reaction D-glucuronate = D-fructuronate. The enzyme catalyses aldehydo-D-galacturonate = keto-D-tagaturonate. The protein operates within carbohydrate metabolism; pentose and glucuronate interconversion. The polypeptide is Uronate isomerase (Cutibacterium acnes (strain DSM 16379 / KPA171202) (Propionibacterium acnes)).